The primary structure comprises 1899 residues: Protocadherin-15 (1899 aa).

Positions 1–26 are cleaved as a signal peptide; the sequence is MLQQFCLWKWLAVGIAVATILASSLA. At 27 to 1376 the chain is on the extracellular side; sequence QNDEDCKLAR…AQAVGYTEGA (1350 aa). A disulfide bridge connects residues C32 and C120. 11 consecutive Cadherin domains span residues 38-147, 148-265, 278-395, 396-509, 510-616, 617-717, 719-819, 820-926, 927-1035, 1037-1144, and 1145-1259; these read GPPA…SPQF, QQQR…GPMF, RPLT…KPYF, TKST…SPTF, SNIS…PPRF, PQLM…GPVF, MFLP…SPVF, TNAS…SPVF, SKTL…IPRF, QDEY…APVF, and TKKM…PPTL. The helical transmembrane segment at 1377-1397 threads the bilayer; the sequence is LLALAVIIILCCMPAILIVMV. The Cytoplasmic segment spans residues 1398-1899; sequence SYRQRQAECA…KRFPSQSTAL (502 aa). 3 disordered regions span residues 1668-1687, 1700-1721, and 1734-1820; these read SPCL…VVEP, HDYP…SFRI, and TKGE…RREL. Composition is skewed to pro residues over residues 1706-1717 and 1743-1773; these read LSPPPTRKPTPP and PDPP…PPTL. The span at 1774-1791 shows a compositional bias: low complexity; the sequence is PLASVPSSSSLPSTQHLS. A compositionally biased stretch (pro residues) spans 1804–1814; sequence AVPPPAAVPEP.

As to expression, in the utricle, localizes to the distal region of the kinocilium and near the tips of the stereocilia.

It localises to the cell membrane. Its function is as follows. Calcium-dependent cell-adhesion protein. Required for inner ear neuroepithelial cell elaboration and cochlear function. Probably involved in the maintenance of normal retinal function. The polypeptide is Protocadherin-15 (Pcdh15) (Gallus gallus (Chicken)).